The sequence spans 101 residues: ATP synthase subunit c (101 aa).

2 consecutive transmembrane segments (helical) span residues 31–51 and 81–101; these read AFAY…GAGQ and AISE…IFVG.

Belongs to the ATPase C chain family. As to quaternary structure, F-type ATPases have 2 components, F(1) - the catalytic core - and F(0) - the membrane proton channel. F(1) has five subunits: alpha(3), beta(3), gamma(1), delta(1), epsilon(1). F(0) has three main subunits: a(1), b(2) and c(10-14). The alpha and beta chains form an alternating ring which encloses part of the gamma chain. F(1) is attached to F(0) by a central stalk formed by the gamma and epsilon chains, while a peripheral stalk is formed by the delta and b chains.

The protein resides in the cell membrane. In terms of biological role, f(1)F(0) ATP synthase produces ATP from ADP in the presence of a proton or sodium gradient. F-type ATPases consist of two structural domains, F(1) containing the extramembraneous catalytic core and F(0) containing the membrane proton channel, linked together by a central stalk and a peripheral stalk. During catalysis, ATP synthesis in the catalytic domain of F(1) is coupled via a rotary mechanism of the central stalk subunits to proton translocation. Functionally, key component of the F(0) channel; it plays a direct role in translocation across the membrane. A homomeric c-ring of between 10-14 subunits forms the central stalk rotor element with the F(1) delta and epsilon subunits. The protein is ATP synthase subunit c of Mesomycoplasma hyopneumoniae (strain 232) (Mycoplasma hyopneumoniae).